We begin with the raw amino-acid sequence, 285 residues long: Enterobactin synthase component B (285 aa).

An isochorismatase region spans residues 2-213 (AIPKLQAYAL…EELLPAPIPA (212 aa)). Residues 209-284 (APIPASKAAL…AWWKLLSREV (76 aa)) enclose the Carrier domain. Mg(2+)-binding residues include Asp227, Gly242, and Asp244. Residue Ser245 is modified to O-(pantetheine 4'-phosphoryl)serine.

In the N-terminal section; belongs to the isochorismatase family. As to quaternary structure, proteins EntB, EntD, EntE, and EntF form a multienzyme complex called enterobactin synthase. Homodimer. Also forms a specific pairwise interaction with EntC; this interaction likely facilitates substrate channeling to connect the EntB and EntC active sites. The cofactor is Mg(2+). In terms of processing, 4'-phosphopantetheine is transferred from CoA to a specific serine of apo-EntB by EntD. Holo-EntB so formed is then acylated with 2,3-dihydroxybenzoate in a reaction catalyzed by EntE.

It is found in the cytoplasm. The enzyme catalyses 3 2,3-dihydroxybenzoate + 3 L-serine + 6 ATP = enterobactin + 6 AMP + 6 diphosphate + 4 H(+). The catalysed reaction is isochorismate + H2O = (2S,3S)-2,3-dihydroxy-2,3-dihydrobenzoate + pyruvate. Its pathway is siderophore biosynthesis; enterobactin biosynthesis. In terms of biological role, involved in the biosynthesis of the siderophore enterobactin (enterochelin), which is a macrocyclic trimeric lactone of N-(2,3-dihydroxybenzoyl)-serine. The serine trilactone serves as a scaffolding for the three catechol functionalities that provide hexadentate coordination for the tightly ligated iron(3+) atoms. EntB is a bifunctional protein that serves as an isochorismate lyase and an aryl carrier protein (ArCP). Catalyzes the conversion of isochorismate to 2,3-dihydro-2,3-dihydroxybenzoate (2,3-diDHB), the precursor of 2,3-dihydroxybenzoate (DHB). In the enterobactin assembly, EntB functions as an aryl carrier protein phosphopantetheinylated near the C terminus by EntD to yield holo-EntB, which is then acylated by EntE with 2,3-dihydroxybenzoyl-AMP to form DHB-holo-EntB. Then this product will serve in the formation of the amide bond between 2,3-dihydroxybenzoate (DHB) and L-serine. The sequence is that of Enterobactin synthase component B from Escherichia coli O157:H7.